Reading from the N-terminus, the 397-residue chain is MFHRIEEALEDLKQGKVVIVCDDENRENEGDFIALAEYITPETINFMITHGRGLVCVPITEEYAERLQLEPMVSHNTDSHHTAFTVSIDHVSTTTGISAHERATTIQELLNPASKGSDFNRPGHIFPLIAKEGGVLRRAGHTEAAVDLAKLCGAEPAGVICEIINEDGTMARVPDLLECAKQFDIKMITIEDLIAYRRHHETLVTREVEITLPTDFGTFHAIGYSNSLDMKEHIALVKGDISTGEPVLVRVHSECLTGDVFGSCRCDCGPQLHAALAQIEREGKGVLLYMRQEGRGIGLLNKLRAYKLQEEGLDTVEANEKLGFPADLRDYGIGAQILKDLGLQSLRLLTNNPRKIAGLQGYDLEVTERVPLQMPTKEENKTYLQTKASKLGHLLNL.

The tract at residues 1–199 (MFHRIEEALE…IEDLIAYRRH (199 aa)) is DHBP synthase. D-ribulose 5-phosphate-binding positions include 26 to 27 (RE), D31, 138 to 142 (RAGHT), and E162. Residue E27 participates in Mg(2+) binding. H141 is a binding site for Mg(2+). Residues 200–397 (HETLVTREVE…ASKLGHLLNL (198 aa)) form a GTP cyclohydrolase II region. GTP is bound at residue 250-254 (RVHSE). Zn(2+)-binding residues include C255, C266, and C268. Residues Q271, 293-295 (EGR), and T315 each bind GTP. D327 (proton acceptor; for GTP cyclohydrolase activity) is an active-site residue. Catalysis depends on R329, which acts as the Nucleophile; for GTP cyclohydrolase activity. Residues T350 and K355 each contribute to the GTP site.

This sequence in the N-terminal section; belongs to the DHBP synthase family. In the C-terminal section; belongs to the GTP cyclohydrolase II family. Mg(2+) is required as a cofactor. The cofactor is Mn(2+). Zn(2+) serves as cofactor.

The catalysed reaction is D-ribulose 5-phosphate = (2S)-2-hydroxy-3-oxobutyl phosphate + formate + H(+). The enzyme catalyses GTP + 4 H2O = 2,5-diamino-6-hydroxy-4-(5-phosphoribosylamino)-pyrimidine + formate + 2 phosphate + 3 H(+). Its pathway is cofactor biosynthesis; riboflavin biosynthesis; 2-hydroxy-3-oxobutyl phosphate from D-ribulose 5-phosphate: step 1/1. It participates in cofactor biosynthesis; riboflavin biosynthesis; 5-amino-6-(D-ribitylamino)uracil from GTP: step 1/4. Catalyzes the conversion of D-ribulose 5-phosphate to formate and 3,4-dihydroxy-2-butanone 4-phosphate. Its function is as follows. Catalyzes the conversion of GTP to 2,5-diamino-6-ribosylamino-4(3H)-pyrimidinone 5'-phosphate (DARP), formate and pyrophosphate. This Bacillus mycoides (strain KBAB4) (Bacillus weihenstephanensis) protein is Riboflavin biosynthesis protein RibBA.